The sequence spans 230 residues: Protein-L-isoaspartate O-methyltransferase (230 aa).

Serine 65 is a catalytic residue.

Belongs to the methyltransferase superfamily. L-isoaspartyl/D-aspartyl protein methyltransferase family. Monomer. Highest contents in seeds.

Its subcellular location is the cytoplasm. It carries out the reaction [protein]-L-isoaspartate + S-adenosyl-L-methionine = [protein]-L-isoaspartate alpha-methyl ester + S-adenosyl-L-homocysteine. Functionally, catalyzes the methyl esterification of L-isoaspartyl residues in peptides and proteins that result from spontaneous decomposition of normal L-aspartyl and L-asparaginyl residues. It plays a role in the repair and/or degradation of damaged proteins. This enzyme does not act on D-aspartyl residues. This Triticum aestivum (Wheat) protein is Protein-L-isoaspartate O-methyltransferase (PCM).